The primary structure comprises 406 residues: Beta-galactoside alpha-2,6-sialyltransferase 1 (406 aa).

Residues M1 to K9 lie on the Cytoplasmic side of the membrane. The helical; Signal-anchor for type II membrane protein transmembrane segment at F10–W26 threads the bilayer. Over K27–C406 the chain is Lumenal. Intrachain disulfides connect C142/C406, C184/C335, and C353/C364. 2 N-linked (GlcNAc...) asparagine glycosylation sites follow: N149 and N161. Substrate is bound by residues S189, N212, N233, S322–G324, C353, Y354, T365, Y369, H370, and K376. Residue Y369 is modified to Phosphotyrosine.

The protein belongs to the glycosyltransferase 29 family. In terms of assembly, monomer and homodimer. In terms of processing, N-glycosylated.

The protein localises to the golgi apparatus. It localises to the golgi stack membrane. Its subcellular location is the secreted. It carries out the reaction a beta-D-galactoside + CMP-N-acetyl-beta-neuraminate = an N-acetyl-alpha-neuraminyl-(2-&gt;6)-beta-D-galactosyl derivative + CMP + H(+). It participates in protein modification; protein glycosylation. With respect to regulation, inhibited by CTP. Transfers sialic acid from CMP-sialic acid to galactose-containing acceptor substrates. In B lymphocytes, generates neuraminidase-sensitive lymphocyte cell-surface differentiation antigens, such as CDw75, HB-6 and CD76. This is Beta-galactoside alpha-2,6-sialyltransferase 1 (ST6GAL1) from Homo sapiens (Human).